We begin with the raw amino-acid sequence, 387 residues long: Putative F-box protein At1g47800 (387 aa).

Residues 8–54 (LQSLDHIPIDVLFEILVKLPAKSVARFLCVSKVWATMIRGEVFIRSF) enclose the F-box domain.

The protein is Putative F-box protein At1g47800 of Arabidopsis thaliana (Mouse-ear cress).